Consider the following 350-residue polypeptide: Kelch domain-containing protein 9 (350 aa).

Kelch repeat units follow at residues 39 to 89, 91 to 137, and 325 to 350; these read RFYL…LVGG, WLCV…SHTC, and QLYL…EFFI.

In terms of assembly, interacts with CCNA1.

The sequence is that of Kelch domain-containing protein 9 (Klhdc9) from Mus musculus (Mouse).